Reading from the N-terminus, the 179-residue chain is Repressor of phase 1 flagellin gene (179 aa).

In terms of biological role, transcriptional repressor of the FliC phase-1 flagellin. The sequence is that of Repressor of phase 1 flagellin gene (fljA) from Salmonella abony.